The primary structure comprises 216 residues: UPF0502 protein VCM66_A0698 (216 aa).

The protein belongs to the UPF0502 family.

The protein is UPF0502 protein VCM66_A0698 of Vibrio cholerae serotype O1 (strain M66-2).